We begin with the raw amino-acid sequence, 322 residues long: Tubulin alpha-4 chain (322 aa).

Residues Ser-15, Gly-19, Thr-20, Thr-54, Asn-81, and Asn-103 each coordinate GTP. Residue Glu-129 is part of the active site.

This sequence belongs to the tubulin family. Dimer of alpha and beta chains. A typical microtubule is a hollow water-filled tube with an outer diameter of 25 nm and an inner diameter of 15 nM. Alpha-beta heterodimers associate head-to-tail to form protofilaments running lengthwise along the microtubule wall with the beta-tubulin subunit facing the microtubule plus end conferring a structural polarity. Microtubules usually have 13 protofilaments but different protofilament numbers can be found in some organisms and specialized cells. Mg(2+) serves as cofactor. In terms of processing, some glutamate residues at the C-terminus are polyglycylated, resulting in polyglycine chains on the gamma-carboxyl group. Glycylation is mainly limited to tubulin incorporated into axonemes (cilia and flagella) whereas glutamylation is prevalent in neuronal cells, centrioles, axonemes, and the mitotic spindle. Both modifications can coexist on the same protein on adjacent residues, and lowering polyglycylation levels increases polyglutamylation, and reciprocally. The precise function of polyglycylation is still unclear. Some glutamate residues at the C-terminus are polyglutamylated, resulting in polyglutamate chains on the gamma-carboxyl group. Polyglutamylation plays a key role in microtubule severing by spastin (SPAST). SPAST preferentially recognizes and acts on microtubules decorated with short polyglutamate tails: severing activity by SPAST increases as the number of glutamates per tubulin rises from one to eight, but decreases beyond this glutamylation threshold.

It localises to the cytoplasm. Its subcellular location is the cytoskeleton. The enzyme catalyses GTP + H2O = GDP + phosphate + H(+). Functionally, tubulin is the major constituent of microtubules, a cylinder consisting of laterally associated linear protofilaments composed of alpha- and beta-tubulin heterodimers. Microtubules grow by the addition of GTP-tubulin dimers to the microtubule end, where a stabilizing cap forms. Below the cap, tubulin dimers are in GDP-bound state, owing to GTPase activity of alpha-tubulin. The protein is Tubulin alpha-4 chain of Gallus gallus (Chicken).